We begin with the raw amino-acid sequence, 164 residues long: Ribosome maturation factor RimP (164 aa).

It belongs to the RimP family.

It is found in the cytoplasm. Its function is as follows. Required for maturation of 30S ribosomal subunits. This is Ribosome maturation factor RimP from Thermodesulfovibrio yellowstonii (strain ATCC 51303 / DSM 11347 / YP87).